The primary structure comprises 87 residues: UPF0473 protein PTH_1066 (87 aa).

Belongs to the UPF0473 family.

The polypeptide is UPF0473 protein PTH_1066 (Pelotomaculum thermopropionicum (strain DSM 13744 / JCM 10971 / SI)).